A 427-amino-acid chain; its full sequence is Trigger factor (427 aa).

Residues Gly163–Pro248 form the PPIase FKBP-type domain.

This sequence belongs to the FKBP-type PPIase family. Tig subfamily.

It is found in the cytoplasm. It catalyses the reaction [protein]-peptidylproline (omega=180) = [protein]-peptidylproline (omega=0). Its function is as follows. Involved in protein export. Acts as a chaperone by maintaining the newly synthesized protein in an open conformation. Functions as a peptidyl-prolyl cis-trans isomerase. This is Trigger factor from Streptococcus pneumoniae serotype 2 (strain D39 / NCTC 7466).